The following is a 294-amino-acid chain: ATP phosphoribosyltransferase (294 aa).

Belongs to the ATP phosphoribosyltransferase family. Long subfamily. It depends on Mg(2+) as a cofactor.

It is found in the cytoplasm. The enzyme catalyses 1-(5-phospho-beta-D-ribosyl)-ATP + diphosphate = 5-phospho-alpha-D-ribose 1-diphosphate + ATP. The protein operates within amino-acid biosynthesis; L-histidine biosynthesis; L-histidine from 5-phospho-alpha-D-ribose 1-diphosphate: step 1/9. Its activity is regulated as follows. Feedback inhibited by histidine. Functionally, catalyzes the condensation of ATP and 5-phosphoribose 1-diphosphate to form N'-(5'-phosphoribosyl)-ATP (PR-ATP). Has a crucial role in the pathway because the rate of histidine biosynthesis seems to be controlled primarily by regulation of HisG enzymatic activity. This chain is ATP phosphoribosyltransferase, found in Chlorobium luteolum (strain DSM 273 / BCRC 81028 / 2530) (Pelodictyon luteolum).